The chain runs to 619 residues: 4-hydroxyphenylalkanoate adenylyltransferase (619 aa).

This sequence belongs to the ATP-dependent AMP-binding enzyme family.

The enzyme catalyses 17-(4-hydroxyphenyl)heptadecanoate + holo-[(phenol)carboxyphthiodiolenone synthase] + ATP = 17-(4-hydroxyphenyl)heptadecanoyl-[(phenol)carboxyphthiodiolenone synthase] + AMP + diphosphate. The catalysed reaction is 19-(4-hydroxyphenyl)nonadecanoate + holo-[(phenol)carboxyphthiodiolenone synthase] + ATP = 19-(4-hydroxyphenyl)nonadecanoyl-[(phenol)carboxyphthiodiolenone synthase] + AMP + diphosphate. It carries out the reaction dodecanoate + ATP + H(+) = dodecanoyl-AMP + diphosphate. It functions in the pathway lipid metabolism; fatty acid biosynthesis. Its function is as follows. Catalyzes the activation of long-chain fatty acids as acyl-adenylates (acyl-AMP), which are then transferred to the multifunctional polyketide synthase PpsA for further chain extension. Involved in the biosynthesis of phenolphthiocerol, which is an important intermediate in the biosynthesis of phenolic glycolipid (PGL), also called mycosid B. The polypeptide is 4-hydroxyphenylalkanoate adenylyltransferase (fadD29) (Mycobacterium tuberculosis (strain ATCC 25618 / H37Rv)).